A 273-amino-acid chain; its full sequence is 4-hydroxy-tetrahydrodipicolinate reductase (273 aa).

Residues G12–M17 and E38 contribute to the NAD(+) site. R39 lines the NADP(+) pocket. NAD(+)-binding positions include G102–T104 and A126–F129. Catalysis depends on H159, which acts as the Proton donor/acceptor. (S)-2,3,4,5-tetrahydrodipicolinate is bound at residue H160. The active-site Proton donor is the K163. G169–T170 contacts (S)-2,3,4,5-tetrahydrodipicolinate.

The protein belongs to the DapB family. As to quaternary structure, homotetramer.

It localises to the cytoplasm. The enzyme catalyses (S)-2,3,4,5-tetrahydrodipicolinate + NAD(+) + H2O = (2S,4S)-4-hydroxy-2,3,4,5-tetrahydrodipicolinate + NADH + H(+). The catalysed reaction is (S)-2,3,4,5-tetrahydrodipicolinate + NADP(+) + H2O = (2S,4S)-4-hydroxy-2,3,4,5-tetrahydrodipicolinate + NADPH + H(+). It participates in amino-acid biosynthesis; L-lysine biosynthesis via DAP pathway; (S)-tetrahydrodipicolinate from L-aspartate: step 4/4. In terms of biological role, catalyzes the conversion of 4-hydroxy-tetrahydrodipicolinate (HTPA) to tetrahydrodipicolinate. This Proteus mirabilis (strain HI4320) protein is 4-hydroxy-tetrahydrodipicolinate reductase.